A 282-amino-acid polypeptide reads, in one-letter code: Bifunctional protein FolD (282 aa).

NADP(+) contacts are provided by residues Gly165–Ser167 and Ile231.

It belongs to the tetrahydrofolate dehydrogenase/cyclohydrolase family. In terms of assembly, homodimer.

The catalysed reaction is (6R)-5,10-methylene-5,6,7,8-tetrahydrofolate + NADP(+) = (6R)-5,10-methenyltetrahydrofolate + NADPH. It catalyses the reaction (6R)-5,10-methenyltetrahydrofolate + H2O = (6R)-10-formyltetrahydrofolate + H(+). It functions in the pathway one-carbon metabolism; tetrahydrofolate interconversion. Catalyzes the oxidation of 5,10-methylenetetrahydrofolate to 5,10-methenyltetrahydrofolate and then the hydrolysis of 5,10-methenyltetrahydrofolate to 10-formyltetrahydrofolate. In Francisella philomiragia subsp. philomiragia (strain ATCC 25017 / CCUG 19701 / FSC 153 / O#319-036), this protein is Bifunctional protein FolD.